A 305-amino-acid chain; its full sequence is Ribonuclease BN (305 aa).

Positions 64, 66, 68, 69, 141, 212, and 270 each coordinate Zn(2+). Catalysis depends on Asp-68, which acts as the Proton acceptor.

It belongs to the RNase Z family. RNase BN subfamily. In terms of assembly, homodimer. It depends on Zn(2+) as a cofactor.

In terms of biological role, zinc phosphodiesterase, which has both exoribonuclease and endoribonuclease activities. The polypeptide is Ribonuclease BN (Escherichia coli O17:K52:H18 (strain UMN026 / ExPEC)).